A 193-amino-acid polypeptide reads, in one-letter code: Large ribosomal subunit protein eL18 (193 aa).

The disordered stretch occupies residues 158–193; it reads HFGAAGVPGSHAKPFTSNRGKERQRSSARRRAFRHK. Positions 183 to 193 are enriched in basic residues; sequence SSARRRAFRHK.

The protein belongs to the eukaryotic ribosomal protein eL18 family.

The protein localises to the cytoplasm. This Trypanosoma cruzi (strain CL Brener) protein is Large ribosomal subunit protein eL18 (RPL18).